Here is a 467-residue protein sequence, read N- to C-terminus: Tel2-interacting protein 2 (467 aa).

Residues 4-45 are a coiled coil; the sequence is YKELARRLHTLQSKNEKEALEKQIDFLDKLVVEVDSLVHEQD.

The protein belongs to the TTI2 family. Component of the TTT complex composed of tel2, tti1 and tti2. Interacts with tel2 and ttiI1. Component of the ASTRA complex composed of at least rvb1, rvb2, tra1, tel2, tti1 and tti2.

It is found in the nucleus. Component of the tel2-tti1-tti2 (TTT) complex that stabilizes protein levels of the phosphatidylinositol 3-kinase-related protein kinase (PIKK) family proteins. The TTT complex is involved in the cellular resistance to DNA damage stresses, like ionizing radiation (IR), ultraviolet (UV) and mitomycin C (MMC). Component of the ASTRA complex involved in chromatin remodeling. The polypeptide is Tel2-interacting protein 2 (Schizosaccharomyces pombe (strain 972 / ATCC 24843) (Fission yeast)).